A 199-amino-acid chain; its full sequence is TATA-box-binding protein (199 aa).

Repeat copies occupy residues I10–L86 and I101–L177.

The protein belongs to the TBP family.

General factor that plays a role in the activation of archaeal genes transcribed by RNA polymerase. Binds specifically to the TATA box promoter element which lies close to the position of transcription initiation. This is TATA-box-binding protein from Pyrobaculum aerophilum (strain ATCC 51768 / DSM 7523 / JCM 9630 / CIP 104966 / NBRC 100827 / IM2).